Consider the following 150-residue polypeptide: Deoxyuridine 5'-triphosphate nucleotidohydrolase (150 aa).

Substrate contacts are provided by residues 69-71 (RSG), N82, 86-88 (LID), and K96.

The protein belongs to the dUTPase family. Mg(2+) serves as cofactor.

It carries out the reaction dUTP + H2O = dUMP + diphosphate + H(+). Its pathway is pyrimidine metabolism; dUMP biosynthesis; dUMP from dCTP (dUTP route): step 2/2. In terms of biological role, this enzyme is involved in nucleotide metabolism: it produces dUMP, the immediate precursor of thymidine nucleotides and it decreases the intracellular concentration of dUTP so that uracil cannot be incorporated into DNA. The sequence is that of Deoxyuridine 5'-triphosphate nucleotidohydrolase from Neisseria meningitidis serogroup B (strain ATCC BAA-335 / MC58).